The sequence spans 264 residues: tRNA pseudouridine synthase A (264 aa).

Asp-51 acts as the Nucleophile in catalysis. Tyr-109 contributes to the substrate binding site.

The protein belongs to the tRNA pseudouridine synthase TruA family. Homodimer.

It catalyses the reaction uridine(38/39/40) in tRNA = pseudouridine(38/39/40) in tRNA. Functionally, formation of pseudouridine at positions 38, 39 and 40 in the anticodon stem and loop of transfer RNAs. In Yersinia pseudotuberculosis serotype O:1b (strain IP 31758), this protein is tRNA pseudouridine synthase A.